The following is a 387-amino-acid chain: Succinate--CoA ligase [ADP-forming] subunit beta (387 aa).

The 237-residue stretch at 9-245 (KDLLESYGLK…KSQENAKELK (237 aa)) folds into the ATP-grasp domain. Residues Lys46, 53–55 (GRG), Glu100, Tyr103, and Glu108 contribute to the ATP site. Residues Asn200 and Asp214 each coordinate Mg(2+). Residues Asn265 and 322 to 324 (GIV) each bind substrate.

It belongs to the succinate/malate CoA ligase beta subunit family. Heterotetramer of two alpha and two beta subunits. Mg(2+) serves as cofactor.

The catalysed reaction is succinate + ATP + CoA = succinyl-CoA + ADP + phosphate. It catalyses the reaction GTP + succinate + CoA = succinyl-CoA + GDP + phosphate. The protein operates within carbohydrate metabolism; tricarboxylic acid cycle; succinate from succinyl-CoA (ligase route): step 1/1. Its function is as follows. Succinyl-CoA synthetase functions in the citric acid cycle (TCA), coupling the hydrolysis of succinyl-CoA to the synthesis of either ATP or GTP and thus represents the only step of substrate-level phosphorylation in the TCA. The beta subunit provides nucleotide specificity of the enzyme and binds the substrate succinate, while the binding sites for coenzyme A and phosphate are found in the alpha subunit. In Francisella tularensis subsp. holarctica (strain FTNF002-00 / FTA), this protein is Succinate--CoA ligase [ADP-forming] subunit beta.